Reading from the N-terminus, the 843-residue chain is Glycogen phosphorylase, brain form (843 aa).

An N-acetylalanine modification is found at alanine 2. Serine 15 carries the phosphoserine; by PHK; in form phosphorylase A modification. Residues aspartate 43, tyrosine 197, and arginine 310 each coordinate AMP. Tyrosine 197 is modified (phosphotyrosine). Residue tyrosine 473 is modified to Phosphotyrosine. Lysine 569 contributes to the pyridoxal 5'-phosphate binding site. The interval 677–678 (TG) is pyridoxal 5'-phosphate. Position 681 is an N6-(pyridoxal phosphate)lysine (lysine 681).

Belongs to the glycogen phosphorylase family. In terms of assembly, homodimer. Dimers associate into a tetramer to form the enzymatically active phosphorylase A. Pyridoxal 5'-phosphate is required as a cofactor. Phosphorylation of Ser-15 converts phosphorylase B (unphosphorylated) to phosphorylase A.

The catalysed reaction is [(1-&gt;4)-alpha-D-glucosyl](n) + phosphate = [(1-&gt;4)-alpha-D-glucosyl](n-1) + alpha-D-glucose 1-phosphate. With respect to regulation, activity of phosphorylase is controlled both by allosteric means (through the non-covalent binding of metabolites) and by covalent modification. Thus AMP allosterically activates, whereas ATP, ADP, and glucose-6-phosphate allosterically inhibit, phosphorylase B. Functionally, glycogen phosphorylase that regulates glycogen mobilization. Phosphorylase is an important allosteric enzyme in carbohydrate metabolism. Enzymes from different sources differ in their regulatory mechanisms and in their natural substrates. However, all known phosphorylases share catalytic and structural properties. This Pongo abelii (Sumatran orangutan) protein is Glycogen phosphorylase, brain form (PYGB).